The primary structure comprises 229 residues: 2-C-methyl-D-erythritol 4-phosphate cytidylyltransferase (229 aa).

This sequence belongs to the IspD/TarI cytidylyltransferase family. IspD subfamily.

The catalysed reaction is 2-C-methyl-D-erythritol 4-phosphate + CTP + H(+) = 4-CDP-2-C-methyl-D-erythritol + diphosphate. Its pathway is isoprenoid biosynthesis; isopentenyl diphosphate biosynthesis via DXP pathway; isopentenyl diphosphate from 1-deoxy-D-xylulose 5-phosphate: step 2/6. Its function is as follows. Catalyzes the formation of 4-diphosphocytidyl-2-C-methyl-D-erythritol from CTP and 2-C-methyl-D-erythritol 4-phosphate (MEP). The chain is 2-C-methyl-D-erythritol 4-phosphate cytidylyltransferase from Neisseria gonorrhoeae (strain NCCP11945).